Consider the following 425-residue polypeptide: Dual-specificity RNA methyltransferase RlmN (425 aa).

Catalysis depends on Glu136, which acts as the Proton acceptor. Positions 142 to 381 constitute a Radical SAM core domain; it reads GDDRGTLCVS…FTAGYASPVR (240 aa). An intrachain disulfide couples Cys149 to Cys392. The [4Fe-4S] cluster site is built by Cys156, Cys160, and Cys163. S-adenosyl-L-methionine is bound by residues 218-219, Ser250, 272-274, and Asn349; these read GE and SLH. The active-site S-methylcysteine intermediate is Cys392.

It belongs to the radical SAM superfamily. RlmN family. The cofactor is [4Fe-4S] cluster.

Its subcellular location is the cytoplasm. The catalysed reaction is adenosine(2503) in 23S rRNA + 2 reduced [2Fe-2S]-[ferredoxin] + 2 S-adenosyl-L-methionine = 2-methyladenosine(2503) in 23S rRNA + 5'-deoxyadenosine + L-methionine + 2 oxidized [2Fe-2S]-[ferredoxin] + S-adenosyl-L-homocysteine. The enzyme catalyses adenosine(37) in tRNA + 2 reduced [2Fe-2S]-[ferredoxin] + 2 S-adenosyl-L-methionine = 2-methyladenosine(37) in tRNA + 5'-deoxyadenosine + L-methionine + 2 oxidized [2Fe-2S]-[ferredoxin] + S-adenosyl-L-homocysteine. In terms of biological role, specifically methylates position 2 of adenine 2503 in 23S rRNA and position 2 of adenine 37 in tRNAs. m2A2503 modification seems to play a crucial role in the proofreading step occurring at the peptidyl transferase center and thus would serve to optimize ribosomal fidelity. The polypeptide is Dual-specificity RNA methyltransferase RlmN (Methylorubrum extorquens (strain PA1) (Methylobacterium extorquens)).